The primary structure comprises 459 residues: UDP-N-acetylmuramate--L-alanine ligase (459 aa).

An ATP-binding site is contributed by Gly118–Thr124.

The protein belongs to the MurCDEF family.

The protein resides in the cytoplasm. It carries out the reaction UDP-N-acetyl-alpha-D-muramate + L-alanine + ATP = UDP-N-acetyl-alpha-D-muramoyl-L-alanine + ADP + phosphate + H(+). Its pathway is cell wall biogenesis; peptidoglycan biosynthesis. In terms of biological role, cell wall formation. This is UDP-N-acetylmuramate--L-alanine ligase from Clostridium beijerinckii (strain ATCC 51743 / NCIMB 8052) (Clostridium acetobutylicum).